The following is a 290-amino-acid chain: Syntaxin-2 (290 aa).

The Cytoplasmic segment spans residues 1-266 (MRDRLPDLTA…KYQSKARRKK (266 aa)). Residue Ser14 is modified to Phosphoserine. A coiled-coil region spans residues 69 to 106 (EGKIKEELEDLNKEIKKTANRIRGKLKAIEQSCDQDEN). Residues 193-255 (LNEIESRHKD…EHAKEETKKA (63 aa)) form the t-SNARE coiled-coil homology domain. A helical; Anchor for type IV membrane protein transmembrane segment spans residues 267 to 290 (WIIAAVVVAVIAVLALIIGLTVGK).

Belongs to the syntaxin family. In terms of assembly, interacts with SYT6 and SYT8; the interaction is Ca(2+)-dependent. In terms of tissue distribution, heart, spleen, liver, and testis.

Its subcellular location is the membrane. Its function is as follows. Essential for epithelial morphogenesis. May mediate Ca(2+)-regulation of exocytosis acrosomal reaction in sperm. The chain is Syntaxin-2 (Stx2) from Rattus norvegicus (Rat).